Here is a 110-residue protein sequence, read N- to C-terminus: Class I hydrophobin 2 (110 aa).

An N-terminal signal peptide occupies residues 1–17 (MQFKFLTTVALATLAVA). 4 cysteine pairs are disulfide-bonded: C28–C89, C36–C83, C37–C71, and C90–C103. N57 carries an N-linked (GlcNAc...) asparagine glycan.

It belongs to the fungal hydrophobin family. Self-assembles to form functional amyloid fibrils called rodlets. Self-assembly into fibrillar rodlets occurs spontaneously at hydrophobic:hydrophilic interfaces and the rodlets further associate laterally to form amphipathic monolayers.

The protein localises to the secreted. The protein resides in the cell wall. Aerial growth, conidiation, and dispersal of filamentous fungi in the environment rely upon a capability of their secreting small amphipathic proteins called hydrophobins (HPBs) with low sequence identity. Class I can self-assemble into an outermost layer of rodlet bundles on aerial cell surfaces, conferring cellular hydrophobicity that supports fungal growth, development and dispersal; whereas Class II form highly ordered films at water-air interfaces through intermolecular interactions but contribute nothing to the rodlet structure. CoH2 is an asexual monokaryon-specific class I hydrophobin that is involved in aerial growth of mycelia. This chain is Class I hydrophobin 2, found in Coprinopsis cinerea (Inky cap fungus).